Reading from the N-terminus, the 483-residue chain is Aspartyl/glutamyl-tRNA(Asn/Gln) amidotransferase subunit B (483 aa).

It belongs to the GatB/GatE family. GatB subfamily. Heterotrimer of A, B and C subunits.

The catalysed reaction is L-glutamyl-tRNA(Gln) + L-glutamine + ATP + H2O = L-glutaminyl-tRNA(Gln) + L-glutamate + ADP + phosphate + H(+). It carries out the reaction L-aspartyl-tRNA(Asn) + L-glutamine + ATP + H2O = L-asparaginyl-tRNA(Asn) + L-glutamate + ADP + phosphate + 2 H(+). Functionally, allows the formation of correctly charged Asn-tRNA(Asn) or Gln-tRNA(Gln) through the transamidation of misacylated Asp-tRNA(Asn) or Glu-tRNA(Gln) in organisms which lack either or both of asparaginyl-tRNA or glutaminyl-tRNA synthetases. The reaction takes place in the presence of glutamine and ATP through an activated phospho-Asp-tRNA(Asn) or phospho-Glu-tRNA(Gln). The sequence is that of Aspartyl/glutamyl-tRNA(Asn/Gln) amidotransferase subunit B from Marinobacter nauticus (strain ATCC 700491 / DSM 11845 / VT8) (Marinobacter aquaeolei).